Consider the following 175-residue polypeptide: NADH dehydrogenase [ubiquinone] iron-sulfur protein 4, mitochondrial (175 aa).

A mitochondrion-targeting transit peptide spans 1-42; sequence MAAVSISVSLRQAMLGRRAMATAAVSVCRVPSRLLSTSTWKL. S173 carries the post-translational modification Phosphoserine.

The protein belongs to the complex I NDUFS4 subunit family. In terms of assembly, this is a component of the iron-sulfur (IP) fragment of the enzyme. Interacts with BCAP31 and TOMM40; the interaction mediates its translocation to the mitochondria; the interaction with BCAP31 is direct.

The protein resides in the mitochondrion inner membrane. Accessory subunit of the mitochondrial membrane respiratory chain NADH dehydrogenase (Complex I), that is believed not to be involved in catalysis. Complex I functions in the transfer of electrons from NADH to the respiratory chain. The immediate electron acceptor for the enzyme is believed to be ubiquinone. The polypeptide is NADH dehydrogenase [ubiquinone] iron-sulfur protein 4, mitochondrial (Ndufs4) (Mus musculus (Mouse)).